The following is a 328-amino-acid chain: Malate dehydrogenase (328 aa).

Residue 11–17 (GAAGQIG) coordinates NAD(+). Residues arginine 94 and arginine 100 each coordinate substrate. Residues asparagine 107, glutamine 114, and 131 to 133 (VGN) contribute to the NAD(+) site. Substrate-binding residues include asparagine 133 and arginine 164. Histidine 189 (proton acceptor) is an active-site residue.

Belongs to the LDH/MDH superfamily. MDH type 2 family.

The enzyme catalyses (S)-malate + NAD(+) = oxaloacetate + NADH + H(+). Functionally, catalyzes the reversible oxidation of malate to oxaloacetate. The sequence is that of Malate dehydrogenase from Xanthomonas campestris pv. campestris (strain B100).